A 207-amino-acid polypeptide reads, in one-letter code: Large ribosomal subunit protein bL25 (207 aa).

The protein belongs to the bacterial ribosomal protein bL25 family. CTC subfamily. Part of the 50S ribosomal subunit; part of the 5S rRNA/L5/L18/L25 subcomplex. Contacts the 5S rRNA. Binds to the 5S rRNA independently of L5 and L18.

In terms of biological role, this is one of the proteins that binds to the 5S RNA in the ribosome where it forms part of the central protuberance. This Brucella abortus (strain S19) protein is Large ribosomal subunit protein bL25.